Consider the following 178-residue polypeptide: Cytochrome b6-f complex iron-sulfur subunit (178 aa).

A helical transmembrane segment spans residues 20–42; that stretch reads LLTFGTATGVALGALYPVANYFM. Residues 65–161 form the Rieske domain; sequence KTGWLATHQA…VDIEDDAVLV (97 aa). Positions 107, 109, 125, and 128 each coordinate [2Fe-2S] cluster. A disulfide bridge links Cys112 with Cys127.

The protein belongs to the Rieske iron-sulfur protein family. The 4 large subunits of the cytochrome b6-f complex are cytochrome b6, subunit IV (17 kDa polypeptide, PetD), cytochrome f and the Rieske protein, while the 4 small subunits are PetG, PetL, PetM and PetN. The complex functions as a dimer. [2Fe-2S] cluster serves as cofactor.

It is found in the cellular thylakoid membrane. It catalyses the reaction 2 oxidized [plastocyanin] + a plastoquinol + 2 H(+)(in) = 2 reduced [plastocyanin] + a plastoquinone + 4 H(+)(out). Its function is as follows. Component of the cytochrome b6-f complex, which mediates electron transfer between photosystem II (PSII) and photosystem I (PSI), cyclic electron flow around PSI, and state transitions. In Prochlorococcus marinus (strain AS9601), this protein is Cytochrome b6-f complex iron-sulfur subunit.